The chain runs to 446 residues: MPKRSFTKDDIRKFAEEENVRYLRLQFTDILGTIKNVEVPVSQLEKVLDNEMMFDGSSIEGFVRIEESDMYLHPDLDTWVIFPWTAGQGKVARLICDVFKTDGTPFEGDPRANLKRVLRRMEDMGFTDFNLGPEPEFFLFKLDEKGEPTLELNDDGGYFDLAPTDLGENCRRDIVLELEDMGFDIEASHHEVAPGQHEIDFKYADAVTACDNIQTFKLVVKTIARKHNLHATFMPKPLFGVNGSGMHFNVSLFKGKENAFFDPEGDLQLTDTAYQFTAGVLKNARGFTAVCNPIVNSYKRLVPGYEAPCYIAWSGKNRSPLVRVPTSRGLSTRIEVRSVDPAANPYMALAAILEAGLDGIENKLEVPEPVNQNIYEMNREEREAVGIQDLPSTLYTALKAMRENKSIKNALGNHIYNQFINSKSIEWDYYRTQVSEWEREQYIKQY.

The region spanning 18 to 103 (ENVRYLRLQF…LICDVFKTDG (86 aa)) is the GS beta-grasp domain. Residues 110–446 (PRANLKRVLR…WEREQYIKQY (337 aa)) form the GS catalytic domain. Positions 134 and 136 each coordinate Mg(2+). E186 lines the ATP pocket. Mg(2+) contacts are provided by E191 and E198. Residues 242–243 (NG) and G243 contribute to the L-glutamate site. Position 247 (H247) interacts with Mg(2+). S251 contributes to the ATP binding site. Positions 300, 306, and 318 each coordinate L-glutamate. Residues R318 and R323 each contribute to the ATP site. Residue E335 coordinates Mg(2+). Residue R337 coordinates L-glutamate.

The protein belongs to the glutamine synthetase family. As to quaternary structure, oligomer of 12 subunits arranged in the form of two hexagons. In its feedback-inhibited form, interacts with TnrA in order to block its DNA-binding activity. The cofactor is Mg(2+).

The protein localises to the cytoplasm. The enzyme catalyses L-glutamate + NH4(+) + ATP = L-glutamine + ADP + phosphate + H(+). With respect to regulation, inhibited by glutamine. Glutamine synthetase (GS) is an unusual multitasking protein that functions as an enzyme, a transcription coregulator, and a chaperone in ammonium assimilation and in the regulation of genes involved in nitrogen metabolism. It catalyzes the ATP-dependent biosynthesis of glutamine from glutamate and ammonia. Feedback-inhibited GlnA also interacts with and regulates the activity of the transcriptional regulator TnrA. During nitrogen limitation, TnrA is in its DNA-binding active state and turns on the transcription of genes required for nitrogen assimilation. Under conditions of nitrogen excess, feedback-inhibited GlnA forms a stable complex with TnrA, which inhibits its DNA-binding activity. In contrast, feedback-inhibited GlnA acts as a chaperone to stabilize the DNA-binding activity of GlnR, which represses the transcription of nitrogen assimilation genes. This is Glutamine synthetase from Staphylococcus epidermidis (strain ATCC 35984 / DSM 28319 / BCRC 17069 / CCUG 31568 / BM 3577 / RP62A).